Consider the following 116-residue polypeptide: Large ribosomal subunit protein bL19 (116 aa).

Belongs to the bacterial ribosomal protein bL19 family.

Functionally, this protein is located at the 30S-50S ribosomal subunit interface and may play a role in the structure and function of the aminoacyl-tRNA binding site. This is Large ribosomal subunit protein bL19 from Clostridioides difficile (strain 630) (Peptoclostridium difficile).